Consider the following 449-residue polypeptide: Phosphoglucosamine mutase (449 aa).

Residue Ser104 is the Phosphoserine intermediate of the active site. Mg(2+)-binding residues include Ser104, Asp243, Asp245, and Asp247. Ser104 bears the Phosphoserine mark.

The protein belongs to the phosphohexose mutase family. Mg(2+) serves as cofactor. In terms of processing, activated by phosphorylation.

The catalysed reaction is alpha-D-glucosamine 1-phosphate = D-glucosamine 6-phosphate. In terms of biological role, catalyzes the conversion of glucosamine-6-phosphate to glucosamine-1-phosphate. The polypeptide is Phosphoglucosamine mutase (Xanthomonas euvesicatoria pv. vesicatoria (strain 85-10) (Xanthomonas campestris pv. vesicatoria)).